We begin with the raw amino-acid sequence, 1384 residues long: Enhancer of mRNA-decapping protein 4 (1384 aa).

WD repeat units follow at residues 171-211, 227-274, 292-331, and 340-390; these read GFTG…SKIQ, NSNR…SNNS, GHAARISEGALSPDGTVLATASHDGYVKFWQIYIEGQDQP, and HNGQ…CLQT. Disordered stretches follow at residues 471 to 494, 551 to 584, and 796 to 931; these read TEVLPPEEESESMTAEGNQGTSES, AMSSDKESGDSGSQNDLSKILPLPSPADFMSPAP, and AGAA…MSTE. A compositionally biased stretch (polar residues) spans 482-494; sequence SMTAEGNQGTSES. Residues 834–844 are compositionally biased toward basic and acidic residues; it reads CSREEIKDRHI. Composition is skewed to polar residues over residues 854–866 and 918–931; these read HLTQNDSQDASAE and SSQSRQIESQMSTE. Residues 930-1012 adopt a coiled-coil conformation; sequence TEVQDELLQM…QQLQDQLVQQ (83 aa).

Belongs to the WD repeat EDC4 family.

It localises to the cytoplasm. Its subcellular location is the P-body. The protein localises to the nucleus. In the process of mRNA degradation, seems to play a role in mRNA decapping. The chain is Enhancer of mRNA-decapping protein 4 (edc4) from Danio rerio (Zebrafish).